A 469-amino-acid chain; its full sequence is MNRLLKQVCMVVVSSFMMASMLTHAASLPDFTELVEKASPAVVNISTEQTVTTKTANEGGQQLGPNSEELNEFFKHFFGQQPFGQQAPPQQGQRSSLGSGFIISHDGYVLTNNHVIDGADVIHVRLNDRREYVAKLVGTDPRTDLALLKIEADDLPIVKMGDSDKLKPGQWVLAIGSPFGFDYTVTAGIVSATGRSLPSDNYVPFIQTDVAINPGNSGGPLFNLDGEVVGINSQIYTRSGGFMGVSFAIPSKVAMSVVDQLKSDGKVSRAWLGVLIQDVNNELAESFGLDRSNGALISRVLPDSPAEKAGLKSGDIILEFNGQSIAHSGELPYIVGQMKADEKVDAKVYRDGKEQTISVTLEARPNDPKVVAQSQQDQNRLGMIVGEVPADMAKKFEIDNGVVIEQVLGGTAARNGLQQGDVITMLNGKRITSVAEFAKIAKDIPSGRSVPMRVIRQGYPMFIPFKIMD.

A signal peptide spans 1–25 (MNRLLKQVCMVVVSSFMMASMLTHA). Catalysis depends on charge relay system residues H114, D144, and S217. Residues 215-217 (GNS) and 272-276 (LGVLI) contribute to the substrate site. PDZ domains lie at 261-352 (LKSD…YRDG) and 358-458 (SVTL…IRQG).

This sequence belongs to the peptidase S1C family.

It localises to the periplasm. It catalyses the reaction Acts on substrates that are at least partially unfolded. The cleavage site P1 residue is normally between a pair of hydrophobic residues, such as Val-|-Val.. Might be efficient in the degradation of transiently denatured and unfolded proteins which accumulate in the periplasm following stress conditions. This chain is Probable periplasmic serine endoprotease DegP-like, found in Marinomonas sp. (strain MWYL1).